The following is a 108-amino-acid chain: Putative disulfide oxidoreductase YuzD (108 aa).

Cysteine 16 and cysteine 19 are joined by a disulfide.

This chain is Putative disulfide oxidoreductase YuzD (yuzD), found in Bacillus subtilis (strain 168).